The chain runs to 203 residues: ATP-dependent Clp protease proteolytic subunit (203 aa).

The active-site Nucleophile is the S100. H125 is a catalytic residue.

The protein belongs to the peptidase S14 family. As to quaternary structure, fourteen ClpP subunits assemble into 2 heptameric rings which stack back to back to give a disk-like structure with a central cavity, resembling the structure of eukaryotic proteasomes.

It localises to the cytoplasm. The enzyme catalyses Hydrolysis of proteins to small peptides in the presence of ATP and magnesium. alpha-casein is the usual test substrate. In the absence of ATP, only oligopeptides shorter than five residues are hydrolyzed (such as succinyl-Leu-Tyr-|-NHMec, and Leu-Tyr-Leu-|-Tyr-Trp, in which cleavage of the -Tyr-|-Leu- and -Tyr-|-Trp bonds also occurs).. Functionally, cleaves peptides in various proteins in a process that requires ATP hydrolysis. Has a chymotrypsin-like activity. Plays a major role in the degradation of misfolded proteins. The sequence is that of ATP-dependent Clp protease proteolytic subunit from Anaeromyxobacter sp. (strain K).